Here is a 201-residue protein sequence, read N- to C-terminus: Ubiquinone biosynthesis accessory factor UbiJ (201 aa).

The region spanning 15–112 (LNTFLYRSPA…QVVQNFVALA (98 aa)) is the SCP2 domain.

It belongs to the UbiJ family. Component of the Ubi complex metabolon, which regroups five ubiquinone biosynthesis proteins (UbiE, UbiF, UbiG, UbiH and UbiI) and two accessory factors (UbiK and the lipid-binding protein UbiJ). Interacts with UbiK and forms a complex composed of 2 UbiK subunits and 1 UbiJ subunit. The UbiK-UbiJ complex interacts with palmitoleic acid.

The protein localises to the cytoplasm. Its pathway is cofactor biosynthesis; ubiquinone biosynthesis. Its function is as follows. Required for ubiquinone (coenzyme Q) biosynthesis under aerobic conditions. Binds hydrophobic ubiquinone biosynthetic intermediates via its SCP2 domain and is essential for the stability of the Ubi complex. May constitute a docking platform where Ubi enzymes assemble and access their SCP2-bound polyprenyl substrates. The polypeptide is Ubiquinone biosynthesis accessory factor UbiJ (Escherichia coli (strain K12)).